A 1385-amino-acid chain; its full sequence is MCAVLEPSMIRWLSEVDNIVVSSLPSDYIPSGPAGVKAESCEVELPGSFGVIDEEDSYIRLLSAFATLVCRMSGESDVAMYSKANRLLKLAVPPGVAFQQLRASVTEAVEGTLALPAVDFDELSALEREKKQLDYYPQYFKVGVVTAADKTKLDQFRYHKFELLLRQVTSSRFEMVYDSERFSPDRIGELGEQLVQFLTLVEAKDDADVYAISLVTSGASRVLPDPTTDLGWGQFRGAIHDIFQHHAETRPDRLCVVETGVGQVAARTFTYSAINCASNIVAHYLLARGIRRGDVVMIYSTRGVDLLVSVLGVLKSGAVFSVIDPAYPPARQNVYLGVAKPAGLIVIQAAGQLDEAVEAFIRDNLSLKARLPALALQTDGAILGGTLPDFHLDTLVPFASLKNTRTDVVVGPDSNPTLSFTSGSEGIPKGVLGRHFSLTYYFDWMAKRFGLSEDDKFTMLSGIAHDPIQRDMFTPIYLGAQLLVPQEDDIGTPGRLATWMATHGATVTHLTPAMGQVLTADATTPFPSLKRAFFVGDVLTKRDCARLQSLAENVAIVNMYGSTETQRAVSYFEVPSCSSNPSYLDNLKSIIPAGRGMHNVQLLIVNRHDRTKLCGIGEVGEIYVRAGGLSEGYRGLPEINKEKFIDNWFVDAGHWGGLDLSGDEPWRNYWLGVRDRLYRTGDLGRYLPNGDCECCGRADDQVKIRGFRIELGEIDTNISQYPLCRENITLLRKDQNGESTLISYLVPRSDQKALASFISAVPESIATESIAGSLIKYHKLINDIRGFLKKRLAGYAIPTLIMVMERLPLNPNGKIDKNKLQFPEPTELDRASEHFASETLGLSSFSPLEQEIRKIWLDLLPTRPAITSSDESFFDLGGTSILATRMAIVLRNRLNISLALSTIFRYPTVKELAKEISRVRGTISDDKSSNSGTTEYYADAKHVSEAELASKYESRLSLLPSGATSAPVYVFLTGVTGFLGCHILADLLNRSRKPYDITVYAHVRASDESSALQRIKSVCTAYGLWKNAYAPRIKVVLGNLAEKQFGLPKKAWHDLQEGIDVIIHNAALVHWVYPYSKLREANVLSTVNVLNLAAAGKAKYFTFVSSTSALDTKHYLELSNAAIESGGSGVPEDDDLMGGSLGLKGGYGQSKWAAEFIIKRAGERGLRGCILRPGYVTGSPSTGASNADDFLLRFLRGCVQLGKIPDIEGTVNMVPVDYVARLATAASFSSSGNTHMMVVNVNAKPRISFRDYLLALKEYGYQVTSVPYDEWSKALESSSDEENPLYPLLYLVLDDLPKKLRSPELDTTNAKFVLEEDFARTNIEPIIITSVSLEVVGSYISFLHKLGFLEEPAKGSRPLPNISLSDEQISLIAAVATARSSTAKP.

Positions 843–920 (SSFSPLEQEI…ELAKEISRVR (78 aa)) constitute a Carrier domain. O-(pantetheine 4'-phosphoryl)serine is present on Ser880.

This sequence belongs to the ATP-dependent AMP-binding enzyme family. As to quaternary structure, heterodimer of an alpha and a beta subunit. Pantetheine 4'-phosphate serves as cofactor.

The enzyme catalyses (S)-2-amino-6-oxohexanoate + NADP(+) + H2O = L-2-aminoadipate + NADPH + 2 H(+). It catalyses the reaction (S)-2-amino-6-oxohexanoate + NAD(+) + H2O = L-2-aminoadipate + NADH + 2 H(+). It carries out the reaction (S)-2-amino-6-oxohexanoate + AMP + diphosphate + NADP(+) = L-2-aminoadipate + ATP + NADPH + H(+). It participates in amino-acid biosynthesis; L-lysine biosynthesis via AAA pathway; L-lysine from L-alpha-aminoadipate (fungal route): step 1/3. Catalyzes the activation of alpha-aminoadipate by ATP-dependent adenylation and the reduction of activated alpha-aminoadipate by NADPH. The activated alpha-aminoadipate is bound to the phosphopantheinyl group of the enzyme itself before it is reduced to (S)-2-amino-6-oxohexanoate. This is L-2-aminoadipate reductase large subunit (LYS2) from Eremothecium gossypii (strain ATCC 10895 / CBS 109.51 / FGSC 9923 / NRRL Y-1056) (Yeast).